Here is a 1480-residue protein sequence, read N- to C-terminus: DNA polymerase zeta catalytic subunit (1480 aa).

Residues 403–488 (DRSKFPKSPL…GDTRKAGKRL (86 aa)) are disordered. The segment covering 411–427 (PLNSSQEVTIHSSQDRQ) has biased composition (polar residues). The segment covering 457–468 (TKREIEFCRDLP) has biased composition (basic and acidic residues). Positions 470–479 (RPTSSEPNQG) are enriched in polar residues. The Zn(2+) site is built by cysteine 1381, cysteine 1384, cysteine 1400, and cysteine 1403. The segment at 1381–1403 (CSSCLKNNIEIIPDKINSLCSDC) adopts a CysA-type zinc-finger fold. The [4Fe-4S] cluster site is built by cysteine 1432, cysteine 1435, cysteine 1446, and cysteine 1451. The CysB motif signature appears at 1432–1451 (CRGCSKLSSSDPVLCKSNSC).

Belongs to the DNA polymerase type-B family. In terms of assembly, forms DNA polymerase zeta with rev7. It depends on [4Fe-4S] cluster as a cofactor.

The protein resides in the mitochondrion. It localises to the nucleus. It carries out the reaction DNA(n) + a 2'-deoxyribonucleoside 5'-triphosphate = DNA(n+1) + diphosphate. Its function is as follows. Nonessential DNA polymerase. Required for DNA damage induced mutagenesis. Involved in DNA repair, mitochondrial DNA repair and translesion synthesis. Has a role in the bypass of abasic (AP) sites. The polypeptide is DNA polymerase zeta catalytic subunit (rev3) (Schizosaccharomyces pombe (strain 972 / ATCC 24843) (Fission yeast)).